The following is a 327-amino-acid chain: Undecaprenyl-phosphate 4-deoxy-4-formamido-L-arabinose transferase (327 aa).

Residues 1 to 235 (MFDAAPIKKV…TCLTTTPLRL (235 aa)) lie on the Cytoplasmic side of the membrane. Residues 236-256 (LSLLGSVIAIGGFSLSVLLIV) traverse the membrane as a helical segment. Residues 257–269 (LRLALGPQWAAEG) are Periplasmic-facing. Residues 270-290 (VFMLFAVLFTFIGAQFIGMGL) form a helical membrane-spanning segment. Residues 291 to 327 (LGEYIGRIYNDVRARPRYFVQQVIYPESTPFTEESHQ) lie on the Cytoplasmic side of the membrane.

Belongs to the glycosyltransferase 2 family.

It is found in the cell inner membrane. It catalyses the reaction UDP-4-deoxy-4-formamido-beta-L-arabinose + di-trans,octa-cis-undecaprenyl phosphate = 4-deoxy-4-formamido-alpha-L-arabinopyranosyl di-trans,octa-cis-undecaprenyl phosphate + UDP. It functions in the pathway glycolipid biosynthesis; 4-amino-4-deoxy-alpha-L-arabinose undecaprenyl phosphate biosynthesis; 4-amino-4-deoxy-alpha-L-arabinose undecaprenyl phosphate from UDP-4-deoxy-4-formamido-beta-L-arabinose and undecaprenyl phosphate: step 1/2. The protein operates within bacterial outer membrane biogenesis; lipopolysaccharide biosynthesis. In terms of biological role, catalyzes the transfer of 4-deoxy-4-formamido-L-arabinose from UDP to undecaprenyl phosphate. The modified arabinose is attached to lipid A and is required for resistance to polymyxin and cationic antimicrobial peptides. The sequence is that of Undecaprenyl-phosphate 4-deoxy-4-formamido-L-arabinose transferase from Salmonella dublin (strain CT_02021853).